A 456-amino-acid polypeptide reads, in one-letter code: Enolase (456 aa).

Q167 provides a ligand contact to (2R)-2-phosphoglycerate. The active-site Proton donor is E209. 3 residues coordinate Mg(2+): D250, E312, and D339. (2R)-2-phosphoglycerate contacts are provided by K364, R393, S394, and K415. K364 functions as the Proton acceptor in the catalytic mechanism.

Belongs to the enolase family. It depends on Mg(2+) as a cofactor.

The protein localises to the cytoplasm. The protein resides in the secreted. Its subcellular location is the cell surface. The catalysed reaction is (2R)-2-phosphoglycerate = phosphoenolpyruvate + H2O. It functions in the pathway carbohydrate degradation; glycolysis; pyruvate from D-glyceraldehyde 3-phosphate: step 4/5. Functionally, catalyzes the reversible conversion of 2-phosphoglycerate (2-PG) into phosphoenolpyruvate (PEP). It is essential for the degradation of carbohydrates via glycolysis. This chain is Enolase, found in Mycoplasmopsis pulmonis (strain UAB CTIP) (Mycoplasma pulmonis).